The chain runs to 232 residues: MTRPQAILTDIEGTTSSISFVKDVLFPYARRAMPAYVREHGNHPQVRHWLNQVADEIGEDVPDEVLITTLQTWIDEDRKHTALKALQGLIWGDGYKTADFTAHIYADAAIQLKAWHAAGIPLYVYSSGSVPAQKLFFAHSDAGDLSGLITDWFDTEVGPKRESASYRRIAERIGVPGPEILFLSDVIEELDAAKRAGMRTALLDRREDYPTPRSADDVGSHQRVESFSQLVL.

Belongs to the HAD-like hydrolase superfamily. MasA/MtnC family. Monomer. The cofactor is Mg(2+).

The enzyme catalyses 5-methylsulfanyl-2,3-dioxopentyl phosphate + H2O = 1,2-dihydroxy-5-(methylsulfanyl)pent-1-en-3-one + phosphate. It functions in the pathway amino-acid biosynthesis; L-methionine biosynthesis via salvage pathway; L-methionine from S-methyl-5-thio-alpha-D-ribose 1-phosphate: step 3/6. The protein operates within amino-acid biosynthesis; L-methionine biosynthesis via salvage pathway; L-methionine from S-methyl-5-thio-alpha-D-ribose 1-phosphate: step 4/6. Its function is as follows. Bifunctional enzyme that catalyzes the enolization of 2,3-diketo-5-methylthiopentyl-1-phosphate (DK-MTP-1-P) into the intermediate 2-hydroxy-3-keto-5-methylthiopentenyl-1-phosphate (HK-MTPenyl-1-P), which is then dephosphorylated to form the acireductone 1,2-dihydroxy-3-keto-5-methylthiopentene (DHK-MTPene). This Xanthomonas euvesicatoria pv. vesicatoria (strain 85-10) (Xanthomonas campestris pv. vesicatoria) protein is Enolase-phosphatase E1.